The primary structure comprises 1960 residues: Myosin-9 (1960 aa).

Alanine 2 is subject to N-acetylalanine. Positions 2 to 838 are mediates interaction with LIMCH1; sequence AQQAADKYLY…RLFTKVKPLL (837 aa). An N6-acetyllysine modification is found at lysine 8. Phosphotyrosine is present on tyrosine 11. Residues 27-77 enclose the Myosin N-terminal SH3-like domain; the sequence is AAKKLVWVPSSKNGFEPASLKEEVGEEAIVELVENGKKVKVNKDDIQKMNP. In terms of domain architecture, Myosin motor spans 81-776; it reads SKVEDMAELT…VLAHLEEERD (696 aa). Lysine 102 bears the N6-acetyllysine mark. Residue 174–181 coordinates ATP; sequence GESGAGKT. 3 positions are modified to N6-acetyllysine: lysine 299, lysine 435, and lysine 613. Serine 628 bears the Phosphoserine mark. The segment at 654–676 is actin-binding; the sequence is LAKLMATLRNTNPNFVRCIIPNH. At tyrosine 754 the chain carries Phosphotyrosine. One can recognise an IQ domain in the interval 779–808; sequence ITDVIIGFQACCRGYLARKAFAKRQQQLTA. The stretch at 841–1926 forms a coiled coil; it reads IRHEDELLAK…LKNKLRRGDL (1086 aa). Lysine 850 carries the post-translational modification N6-succinyllysine. 3 positions are modified to N6-acetyllysine: lysine 860, lysine 975, and lysine 1024. Basic and acidic residues predominate over residues 1035–1055; it reads RLRREEKQRQELEKTRRKLEG. The interval 1035–1057 is disordered; it reads RLRREEKQRQELEKTRRKLEGDS. The residue at position 1114 (serine 1114) is a Phosphoserine. Residues 1117–1167 form a disordered region; that stretch reads QEDLESERASRNKAEKQKRDLGEELEALKTELEDTLDSTAAQQELRSKREQ. Basic and acidic residues predominate over residues 1122–1148; the sequence is SERASRNKAEKQKRDLGEELEALKTEL. 2 positions are modified to N6-acetyllysine: lysine 1234 and lysine 1249. The interval 1327-1352 is disordered; that stretch reads LSTKLKQMEDEKNSFREQLEEEEEAK. A compositionally biased stretch (basic and acidic residues) spans 1332–1352; the sequence is KQMEDEKNSFREQLEEEEEAK. N6-acetyllysine occurs at positions 1357, 1392, 1404, 1410, 1459, and 1638. Lysine 1669 carries the post-translational modification N6-succinyllysine. Phosphoserine is present on serine 1714. The tract at residues 1768 to 1788 is disordered; the sequence is LERSHAQKNENARQQLERQNK. N6-acetyllysine is present on residues lysine 1793, lysine 1802, and lysine 1845. A disordered region spans residues 1877–1908; sequence RQLEEAEEEAQRANASRRKLQRELEDATETAD. At arginine 1923 the chain carries Omega-N-methylarginine. The residue at position 1939 (threonine 1939) is a Phosphothreonine. Positions 1939 to 1960 are disordered; sequence TGDCSDEEVDGKADGADAKAAE. Serine 1943 is modified (phosphoserine). A compositionally biased stretch (basic and acidic residues) spans 1948-1960; it reads DGKADGADAKAAE.

This sequence belongs to the TRAFAC class myosin-kinesin ATPase superfamily. Myosin family. In terms of assembly, myosin is a hexameric protein that consists of 2 heavy chain subunits (MHC), 2 alkali light chain subunits (MLC) and 2 regulatory light chain subunits (MLC-2). Interacts with RASIP1. Interacts with DDR1. Interacts with PDLIM2. Interacts with SVIL. Interacts with HTRA3. Interacts with Myo7a. Interacts with CFAP95. Interacts with LIMCH1; independently of the integration of MYH9 into the myosin complex. Interacts with RAB3A. Interacts with ZBED4. Interacts with S100A4; this interaction increases cell motility. ISGylated. In terms of processing, ubiquitination.

It is found in the cytoplasm. The protein localises to the cytoskeleton. Its subcellular location is the cell cortex. It localises to the cytoplasmic vesicle. The protein resides in the secretory vesicle. It is found in the cortical granule. Its function is as follows. Cellular myosin that appears to play a role in cytokinesis, cell shape, and specialized functions such as secretion and capping. Required for cortical actin clearance prior to oocyte exocytosis. Promotes cell motility in conjunction with S100A4. During cell spreading, plays an important role in cytoskeleton reorganization, focal contact formation (in the margins but not the central part of spreading cells), and lamellipodial retraction; this function is mechanically antagonized by MYH10. The chain is Myosin-9 (Myh9) from Mus musculus (Mouse).